Consider the following 184-residue polypeptide: Adenine phosphoribosyltransferase (184 aa).

Belongs to the purine/pyrimidine phosphoribosyltransferase family. As to quaternary structure, homodimer.

Its subcellular location is the cytoplasm. The enzyme catalyses AMP + diphosphate = 5-phospho-alpha-D-ribose 1-diphosphate + adenine. The protein operates within purine metabolism; AMP biosynthesis via salvage pathway; AMP from adenine: step 1/1. Functionally, catalyzes a salvage reaction resulting in the formation of AMP, that is energically less costly than de novo synthesis. This chain is Adenine phosphoribosyltransferase, found in Shewanella putrefaciens (strain CN-32 / ATCC BAA-453).